The chain runs to 107 residues: DNA-directed RNA polymerase subunit omega (107 aa).

The protein belongs to the RNA polymerase subunit omega family. As to quaternary structure, the RNAP catalytic core consists of 2 alpha, 1 beta, 1 beta' and 1 omega subunit. When a sigma factor is associated with the core the holoenzyme is formed, which can initiate transcription.

It catalyses the reaction RNA(n) + a ribonucleoside 5'-triphosphate = RNA(n+1) + diphosphate. Promotes RNA polymerase assembly. Latches the N- and C-terminal regions of the beta' subunit thereby facilitating its interaction with the beta and alpha subunits. This is DNA-directed RNA polymerase subunit omega from Oenococcus oeni (strain ATCC BAA-331 / PSU-1).